The sequence spans 92 residues: MSREQAFEMLIKILCKTDSTDDMKLILECILTRSEMEDLIDRIRIYNELLNTSNSQREVASKLGVSITKITRGAANLQDNNIKDFLRKKISY.

A DNA-binding region spans residues 56-79; that stretch reads QREVASKLGVSITKITRGAANLQD.

The protein belongs to the TrpR family. Homodimer.

It localises to the cytoplasm. Its function is as follows. This protein is an aporepressor. When complexed with L-tryptophan it binds the operator region of the trp operon and prevents the initiation of transcription. The polypeptide is Trp operon repressor homolog (Xylella fastidiosa (strain M23)).